Here is a 378-residue protein sequence, read N- to C-terminus: Cell death-related nuclease 6 (378 aa).

The signal sequence occupies residues 1–17 (MIRQIILIVSLIGISNA). N-linked (GlcNAc...) asparagine glycosylation is found at N51, N92, and N111.

The protein belongs to the DNase II family.

Involved in apoptotic DNA degradation. This Caenorhabditis elegans protein is Cell death-related nuclease 6 (crn-6).